A 702-amino-acid chain; its full sequence is Methionine--tRNA ligase (702 aa).

The 'HIGH' region signature appears at Pro14 to His24. 4 residues coordinate Zn(2+): Cys146, Cys149, Cys159, and Cys162. The 'KMSKS' region signature appears at Lys344 to Ser348. Lys347 is an ATP binding site. One can recognise a tRNA-binding domain in the interval Glu601–Gln702.

The protein belongs to the class-I aminoacyl-tRNA synthetase family. MetG type 1 subfamily. In terms of assembly, homodimer. Zn(2+) is required as a cofactor.

Its subcellular location is the cytoplasm. The catalysed reaction is tRNA(Met) + L-methionine + ATP = L-methionyl-tRNA(Met) + AMP + diphosphate. Functionally, is required not only for elongation of protein synthesis but also for the initiation of all mRNA translation through initiator tRNA(fMet) aminoacylation. This chain is Methionine--tRNA ligase, found in Chlorobium phaeobacteroides (strain DSM 266 / SMG 266 / 2430).